We begin with the raw amino-acid sequence, 534 residues long: Zinc finger protein 703-A (534 aa).

Disordered regions lie at residues 1-35 (MNCS…THPV), 90-251 (SQIG…VAPV), and 300-320 (QLPG…LTGA). 3 stretches are compositionally biased toward low complexity: residues 15–34 (QSSS…PTHP), 115–124 (RSSSLKLGES), and 146–155 (GSSAGGSADK). Residues 173 to 182 (SPSSRVSSPG) show a composition bias toward polar residues. Residues 185 to 200 (CDSKNNESQEKKEPEA) show a composition bias toward basic and acidic residues. The span at 204-217 (SLETSQANPTLTRA) shows a compositional bias: polar residues. Low complexity predominate over residues 218–229 (SISNSSAESSQS). Positions 230-239 (GDVTPSSKSD) are enriched in polar residues. A C2H2-type zinc finger spans residues 406-434 (HICNWVSASGPCDKRFATSEELLAHLRTH).

This sequence belongs to the Elbow/Noc family.

It is found in the nucleus. The protein localises to the cytoplasm. Transcriptional corepressor which does not bind directly to DNA and may regulate transcription through recruitment of histone deacetylases to gene promoters. Regulates cell adhesion, migration and proliferation. Involved in specification of the lateral neural plate border (NPB). May be required for segmental gene expression during hindbrain development. This is Zinc finger protein 703-A (znf703-a) from Xenopus laevis (African clawed frog).